Reading from the N-terminus, the 276-residue chain is Putative oxidoreductase SadH (276 aa).

Residue Ser142 coordinates substrate. The active-site Proton acceptor is Tyr155.

The protein belongs to the short-chain dehydrogenases/reductases (SDR) family.

Its function is as follows. Required for maintaining the appropriate mycolic acid composition and permeability of the envelope on its exposure to acidic pH. This is Putative oxidoreductase SadH (sadH) from Mycobacterium tuberculosis (strain CDC 1551 / Oshkosh).